Reading from the N-terminus, the 339-residue chain is UDP-3-O-acylglucosamine N-acyltransferase (339 aa).

Catalysis depends on His251, which acts as the Proton acceptor.

Belongs to the transferase hexapeptide repeat family. LpxD subfamily. Homotrimer.

The catalysed reaction is a UDP-3-O-[(3R)-3-hydroxyacyl]-alpha-D-glucosamine + a (3R)-hydroxyacyl-[ACP] = a UDP-2-N,3-O-bis[(3R)-3-hydroxyacyl]-alpha-D-glucosamine + holo-[ACP] + H(+). The protein operates within bacterial outer membrane biogenesis; LPS lipid A biosynthesis. Functionally, catalyzes the N-acylation of UDP-3-O-acylglucosamine using 3-hydroxyacyl-ACP as the acyl donor. Is involved in the biosynthesis of lipid A, a phosphorylated glycolipid that anchors the lipopolysaccharide to the outer membrane of the cell. This is UDP-3-O-acylglucosamine N-acyltransferase from Paramagnetospirillum magneticum (strain ATCC 700264 / AMB-1) (Magnetospirillum magneticum).